Here is a 177-residue protein sequence, read N- to C-terminus: Phycoerythrin beta subunit (177 aa).

Positions 18, 28, 35, and 39 each coordinate (2R,3E)-phycocyanobilin. 15,16-dihydrobiliverdin contacts are provided by Cys50, Asp54, and Cys61. (2R,3E)-phycocyanobilin contacts are provided by Arg77, Cys82, Arg84, and Asp85. Residues Arg129, Gln148, and Lys149 each coordinate 15,16-dihydrobiliverdin. Pro154, Gly156, and Cys158 together coordinate (2R,3E)-phycocyanobilin.

Belongs to the phycobiliprotein family. Heterotetramer of 2 identical alpha chains and 2 identical beta chains which form 2 alpha-beta heterodimers within the heterotetramer. The two alpha-beta heterodimers are rotated to an open configuration in contrast to the closed configuration found in other cryptophyte species due to the insertion of a single amino acid, 'Asp-65', in a conserved region of the alpha chain. In the open form, the central chromophores are not in physical contact but are separated by a water-filled channel. In terms of processing, contains three phycocyanobilin chromophores and one 15,16-dihydrobiliverdin chromophore with binding of the phycocyanobilin chromophores mediated by both the alpha and beta subunits.

Its subcellular location is the plastid. The protein resides in the chloroplast thylakoid membrane. Its function is as follows. Light-harvesting photosynthetic bile pigment-protein from the phycobiliprotein complex. In Hemiselmis virescens, this protein is Phycoerythrin beta subunit.